The primary structure comprises 122 residues: Large ribosomal subunit protein uL14 (122 aa).

Belongs to the universal ribosomal protein uL14 family. As to quaternary structure, part of the 50S ribosomal subunit. Forms a cluster with proteins L3 and L19. In the 70S ribosome, L14 and L19 interact and together make contacts with the 16S rRNA in bridges B5 and B8.

Functionally, binds to 23S rRNA. Forms part of two intersubunit bridges in the 70S ribosome. This Thermosipho africanus (strain TCF52B) protein is Large ribosomal subunit protein uL14.